Here is a 317-residue protein sequence, read N- to C-terminus: Protoheme IX farnesyltransferase (317 aa).

The next 9 helical transmembrane spans lie at 39-58 (VMSL…PGSL), 62-84 (LGAI…NMWY), 100-120 (IPAG…LAVG), 123-143 (LVMW…AIFF), 160-180 (IVIG…AVTG), 184-204 (LMPV…FWSL), 233-253 (IMAY…LGDT), 256-276 (VYGL…WRVL), and 293-313 (ARAA…ALAV).

This sequence belongs to the UbiA prenyltransferase family. Protoheme IX farnesyltransferase subfamily.

The protein resides in the cell inner membrane. The enzyme catalyses heme b + (2E,6E)-farnesyl diphosphate + H2O = Fe(II)-heme o + diphosphate. It functions in the pathway porphyrin-containing compound metabolism; heme O biosynthesis; heme O from protoheme: step 1/1. Functionally, converts heme B (protoheme IX) to heme O by substitution of the vinyl group on carbon 2 of heme B porphyrin ring with a hydroxyethyl farnesyl side group. The sequence is that of Protoheme IX farnesyltransferase from Granulibacter bethesdensis (strain ATCC BAA-1260 / CGDNIH1).